The following is a 557-amino-acid chain: MVLSDIEIANSVQMKSIKEVAEKLGIAEDALSLYGNYKAKISAGQLEALKDKPDGKLILVTAISPTPAGEGKTTTSVGLVDALAAIGKKAVIALREPSLGPVFGIKGGAAGGGHAQVVPMEDINLHFTGDFHAIGVANNLLAALIDNHIHHGNALGIDSRRITWKRAVDMNDRQLRHIVDGLQGKVNGVPREDGFDITVASEVMAILCLSENITDLKNRLEKIIIGYSFEGKPVTAKDLKAGGAMAAVLKDAIHPNLVQTLEHTPALIHGGPFANIAHGCNSVLATKLALKYADYAVTEAGFGADLGAEKFIDIKCRTSGLRPAAVVLVATIRALKMHGGVAKSDLAEENVQAVVDGLPNLEKHLENIQDVYGLPAVVAINKFPLDTEAELQAVYDACQKRGVDVVISDVWANGGAGGKELAEKVVELAEGDNHFQFVYNEEDSIETKLNKIVTKVYGGKGVRLTPAAKRELKQLDELGFSNYPICMAKTQYSFSDDAKKLGAPKDFVVTISQLKVSAGAGFIVALTGAIMTMPGLPKVPASEKIDVDKDGNISGLF.

Thr66–Thr73 is a binding site for ATP.

It belongs to the formate--tetrahydrofolate ligase family.

The enzyme catalyses (6S)-5,6,7,8-tetrahydrofolate + formate + ATP = (6R)-10-formyltetrahydrofolate + ADP + phosphate. It participates in one-carbon metabolism; tetrahydrofolate interconversion. The polypeptide is Formate--tetrahydrofolate ligase 1 (Streptococcus sanguinis (strain SK36)).